A 96-amino-acid chain; its full sequence is UPF0235 protein YggU (96 aa).

The protein belongs to the UPF0235 family.

This chain is UPF0235 protein YggU, found in Salmonella agona (strain SL483).